Here is a 1119-residue protein sequence, read N- to C-terminus: Protein translocase subunit SecA (1119 aa).

ATP-binding positions include glutamine 175, 213-217, and aspartate 714; that span reads GEGKT. Zn(2+) contacts are provided by cysteine 1106, cysteine 1108, cysteine 1117, and cysteine 1118.

It belongs to the SecA family. In terms of assembly, monomer and homodimer. Part of the essential Sec protein translocation apparatus which comprises SecA, SecYEG and auxiliary proteins SecDF. Other proteins may also be involved. Zn(2+) serves as cofactor.

It is found in the cell inner membrane. Its subcellular location is the cytoplasm. It carries out the reaction ATP + H2O + cellular proteinSide 1 = ADP + phosphate + cellular proteinSide 2.. Functionally, part of the Sec protein translocase complex. Interacts with the SecYEG preprotein conducting channel. Has a central role in coupling the hydrolysis of ATP to the transfer of proteins into and across the cell membrane, serving as an ATP-driven molecular motor driving the stepwise translocation of polypeptide chains across the membrane. This Azobacteroides pseudotrichonymphae genomovar. CFP2 protein is Protein translocase subunit SecA.